A 110-amino-acid chain; its full sequence is Large ribosomal subunit protein uL22 (110 aa).

The protein belongs to the universal ribosomal protein uL22 family. Part of the 50S ribosomal subunit.

Functionally, this protein binds specifically to 23S rRNA; its binding is stimulated by other ribosomal proteins, e.g. L4, L17, and L20. It is important during the early stages of 50S assembly. It makes multiple contacts with different domains of the 23S rRNA in the assembled 50S subunit and ribosome. In terms of biological role, the globular domain of the protein is located near the polypeptide exit tunnel on the outside of the subunit, while an extended beta-hairpin is found that lines the wall of the exit tunnel in the center of the 70S ribosome. The chain is Large ribosomal subunit protein uL22 from Verminephrobacter eiseniae (strain EF01-2).